Reading from the N-terminus, the 142-residue chain is Large ribosomal subunit protein uL22 (142 aa).

Positions 122–142 (RAEAPEETKPSRGTNKEQKAA) are disordered.

The protein belongs to the universal ribosomal protein uL22 family. In terms of assembly, part of the 50S ribosomal subunit.

In terms of biological role, this protein binds specifically to 23S rRNA; its binding is stimulated by other ribosomal proteins, e.g. L4, L17, and L20. It is important during the early stages of 50S assembly. It makes multiple contacts with different domains of the 23S rRNA in the assembled 50S subunit and ribosome. Its function is as follows. The globular domain of the protein is located near the polypeptide exit tunnel on the outside of the subunit, while an extended beta-hairpin is found that lines the wall of the exit tunnel in the center of the 70S ribosome. The chain is Large ribosomal subunit protein uL22 from Gluconobacter oxydans (strain 621H) (Gluconobacter suboxydans).